The sequence spans 411 residues: Glycogen synthase kinase-3 homolog MsK-2 (411 aa).

Residues 74-358 (YMAERAVGQG…ALEALVHPFF (285 aa)) enclose the Protein kinase domain. Residues 80–88 (VGQGSFGVV) and K103 each bind ATP. Residue D199 is the Proton acceptor of the active site. Residue Y234 is modified to Phosphotyrosine.

This sequence belongs to the protein kinase superfamily. CMGC Ser/Thr protein kinase family. GSK-3 subfamily. As to expression, absent in leaves and petioles while a moderate expression is seen in the stems, roots, and nodes.

The enzyme catalyses L-seryl-[protein] + ATP = O-phospho-L-seryl-[protein] + ADP + H(+). It catalyses the reaction L-threonyl-[protein] + ATP = O-phospho-L-threonyl-[protein] + ADP + H(+). This Medicago sativa (Alfalfa) protein is Glycogen synthase kinase-3 homolog MsK-2 (MSK-2).